We begin with the raw amino-acid sequence, 285 residues long: Geranyl diphosphate 2-C-methyltransferase (285 aa).

This sequence belongs to the geranyl diphosphate 2-C-methyltransferase family. Mg(2+) serves as cofactor.

The enzyme catalyses (2E)-geranyl diphosphate + S-adenosyl-L-methionine = (E)-2-methylgeranyl diphosphate + S-adenosyl-L-homocysteine + H(+). In terms of biological role, catalyzes the SAM-dependent methylation of geranyl diphosphate (GPP) to yield (E)-2-methylgeranyl diphosphate (2-MeGPP). This chain is Geranyl diphosphate 2-C-methyltransferase, found in Saccharopolyspora erythraea (strain ATCC 11635 / DSM 40517 / JCM 4748 / NBRC 13426 / NCIMB 8594 / NRRL 2338).